A 62-amino-acid polypeptide reads, in one-letter code: Potassium channel toxin kappa-KTx 3.3 (62 aa).

The signal sequence occupies residues methionine 1–alanine 26. A propeptide spanning residues glutamate 27–glutamate 36 is cleaved from the precursor. Intrachain disulfides connect cysteine 43-cysteine 61 and cysteine 47-cysteine 57.

Belongs to the short scorpion toxin superfamily. Potassium channel inhibitor kappa-KTx family. Kappa-KTx 3 subfamily. As to expression, expressed by the venom gland.

It is found in the secreted. In terms of biological role, potassium channel inhibitor (Kv). The chain is Potassium channel toxin kappa-KTx 3.3 from Heterometrus petersii (Asian forest scorpion).